A 339-amino-acid polypeptide reads, in one-letter code: Methionyl-tRNA formyltransferase (339 aa).

A (6S)-5,6,7,8-tetrahydrofolate-binding site is contributed by 110 to 113 (SLLP).

It belongs to the Fmt family.

It carries out the reaction L-methionyl-tRNA(fMet) + (6R)-10-formyltetrahydrofolate = N-formyl-L-methionyl-tRNA(fMet) + (6S)-5,6,7,8-tetrahydrofolate + H(+). Functionally, attaches a formyl group to the free amino group of methionyl-tRNA(fMet). The formyl group appears to play a dual role in the initiator identity of N-formylmethionyl-tRNA by promoting its recognition by IF2 and preventing the misappropriation of this tRNA by the elongation apparatus. In Prochlorococcus marinus (strain SARG / CCMP1375 / SS120), this protein is Methionyl-tRNA formyltransferase.